The following is a 136-amino-acid chain: Crossover junction endodeoxyribonuclease Hjc (136 aa).

Glu-9 is a Mg(2+) binding site. The active site involves Ser-29. Mg(2+)-binding residues include Asp-38 and Glu-51.

The protein belongs to the Holliday junction resolvase Hjc family. As to quaternary structure, homodimer. Mg(2+) is required as a cofactor.

The catalysed reaction is Endonucleolytic cleavage at a junction such as a reciprocal single-stranded crossover between two homologous DNA duplexes (Holliday junction).. Functionally, a structure-specific endonuclease that resolves Holliday junction (HJ) intermediates during genetic recombination. Cleaves 4-way DNA junctions introducing paired nicks in opposing strands, leaving a 5'-terminal phosphate and a 3'-terminal hydroxyl group that are subsequently ligated to produce recombinant products. The protein is Crossover junction endodeoxyribonuclease Hjc of Archaeoglobus fulgidus (strain ATCC 49558 / DSM 4304 / JCM 9628 / NBRC 100126 / VC-16).